We begin with the raw amino-acid sequence, 143 residues long: MEYANLHYVKESSNLERSSTYKSSKIQDEAKQLLYDYVYIKEKLLTTSSNSLTHYQWYLIYKHTCRCFQQVVRIVYWFLGNQVIRENFSIKKRKPHNHIPQLLEQCTCIAESFEGIYTKKQILYFKCYGTFKTWKKIANFPHL.

Has a role in meiosis. This is Meiotically up-regulated gene 128 protein (mug128) from Schizosaccharomyces pombe (strain 972 / ATCC 24843) (Fission yeast).